We begin with the raw amino-acid sequence, 269 residues long: MTPLKIAIAGANGRMGRVLVEAVNNHPDTVLSGALEHSGSEALGLDAGYAVGLKTGIAISDDVDTVLAQSDVLIDFTRPEPTLKHLQKCVEKQVNIIIGTTGFDDAGKAAIRAAAEKTGIVFAANFSVGVNLTFHILDTVALVLNEGYDIEIIEGHHRHKVDAPSGTALRMGEVIAGALGRDLKQCAVYGREGHTGPRDPSTIGFATVRAGDIVGDHTALFATDGERVEITHKASSRMTFAAGAVRAAVWVNGKTGLYDMQDVLGLNNR.

Residues 10-15, E36, 99-101, and 123-126 contribute to the NAD(+) site; these read GANGRM, GTT, and AANF. The active-site Proton donor/acceptor is H156. Position 157 (H157) interacts with (S)-2,3,4,5-tetrahydrodipicolinate. K160 acts as the Proton donor in catalysis. (S)-2,3,4,5-tetrahydrodipicolinate is bound at residue 166-167; that stretch reads GT.

The protein belongs to the DapB family.

It localises to the cytoplasm. It catalyses the reaction (S)-2,3,4,5-tetrahydrodipicolinate + NAD(+) + H2O = (2S,4S)-4-hydroxy-2,3,4,5-tetrahydrodipicolinate + NADH + H(+). It carries out the reaction (S)-2,3,4,5-tetrahydrodipicolinate + NADP(+) + H2O = (2S,4S)-4-hydroxy-2,3,4,5-tetrahydrodipicolinate + NADPH + H(+). It participates in amino-acid biosynthesis; L-lysine biosynthesis via DAP pathway; (S)-tetrahydrodipicolinate from L-aspartate: step 4/4. In terms of biological role, catalyzes the conversion of 4-hydroxy-tetrahydrodipicolinate (HTPA) to tetrahydrodipicolinate. The protein is 4-hydroxy-tetrahydrodipicolinate reductase of Neisseria meningitidis serogroup A / serotype 4A (strain DSM 15465 / Z2491).